A 110-amino-acid chain; its full sequence is uncharacterized protein (110 aa).

The interval serine 38–aspartate 62 is disordered.

This is an uncharacterized protein from Mus musculus (Mouse).